The following is a 168-amino-acid chain: 3-isopropylmalate dehydratase small subunit 2 (168 aa).

The protein belongs to the LeuD family. LeuD type 2 subfamily. In terms of assembly, heterodimer of LeuC and LeuD.

The catalysed reaction is (2R,3S)-3-isopropylmalate = (2S)-2-isopropylmalate. It functions in the pathway amino-acid biosynthesis; L-leucine biosynthesis; L-leucine from 3-methyl-2-oxobutanoate: step 2/4. Its function is as follows. Catalyzes the isomerization between 2-isopropylmalate and 3-isopropylmalate, via the formation of 2-isopropylmaleate. This chain is 3-isopropylmalate dehydratase small subunit 2 (leuD2), found in Methanopyrus kandleri (strain AV19 / DSM 6324 / JCM 9639 / NBRC 100938).